The sequence spans 256 residues: Pimeloyl-[acyl-carrier protein] methyl ester esterase (256 aa).

The region spanning 15–242 is the AB hydrolase-1 domain; sequence HLVLLHGWGL…AAHAPFISHP (228 aa). Substrate contacts are provided by residues W22, 82-83, and 143-147; these read SL and FLALQ. The active-site Nucleophile is the S82. Catalysis depends on residues D207 and H235. A substrate-binding site is contributed by H235.

Belongs to the AB hydrolase superfamily. Carboxylesterase BioH family. As to quaternary structure, monomer.

The protein resides in the cytoplasm. It catalyses the reaction 6-carboxyhexanoyl-[ACP] methyl ester + H2O = 6-carboxyhexanoyl-[ACP] + methanol + H(+). The protein operates within cofactor biosynthesis; biotin biosynthesis. Functionally, the physiological role of BioH is to remove the methyl group introduced by BioC when the pimeloyl moiety is complete. It allows to synthesize pimeloyl-ACP via the fatty acid synthetic pathway through the hydrolysis of the ester bonds of pimeloyl-ACP esters. This chain is Pimeloyl-[acyl-carrier protein] methyl ester esterase, found in Shigella dysenteriae serotype 1 (strain Sd197).